We begin with the raw amino-acid sequence, 250 residues long: MKPTMALKPLVFALAALMAVAAQAGPAEKWKPTPAPTGTVAAAVTDTQVSKDNKFDDTKTLNNAGANGSLSNSKGNLGANIAAGSGNQQDNAAAITSSAGDAATVFAVADIYQESKDNKFTNKGTQNNALLNNSANNSSGNVGVNVAAGQGNQQKNNLAIVTADGKNVAAASNTEQVSLDNHFLNEASSKHSYKPQYVVNNAGLLNSANNASGNIGVNVAAGAGNQQSNTLTLGSGCTVCAAGTGSKLAF.

Residues 1-24 form the signal peptide; it reads MKPTMALKPLVFALAALMAVAAQA. One copy of the FapC_R1 repeat lies at 62-95; it reads NNAGANGSLSNSKGNLGANIAAGSGNQQDNAAAI. The tract at residues 96-126 is linker 1; sequence TSSAGDAATVFAVADIYQESKDNKFTNKGTQ. One copy of the FapC_R2 repeat lies at 127–160; that stretch reads NNALLNNSANNSSGNVGVNVAAGQGNQQKNNLAI. Positions 161–199 are linker 2; it reads VTADGKNVAAASNTEQVSLDNHFLNEASSKHSYKPQYVV. A FapC_R3 repeat occupies 200–233; it reads NNAGLLNSANNASGNIGVNVAAGAGNQQSNTLTL. The Cys-X-X-Cys signature appears at 237-240; the sequence is CTVC.

This sequence belongs to the FapB/FapC family. The major component of purified amyloid fibrils. Forms fibrils in vitro; in the presence of FapA the fibrils are about 50% wider. Interacts with FapA. Fibrillates in vitro; this is inhibited by FapA. Fibrils are resistant to boiling in 2% (weight/vol) SDS and require &gt;90% (vol/vol) formic acid to dissolve.

The protein localises to the fimbrium. It localises to the secreted. Its function is as follows. The major functional amyloid subunit in this bacterium. Intrinsically disordered in its monomeric state. Upon overexpression of the endogenous six-gene locus (fapA-fapF) in situ, cells form large clumps during liquid growth, make large amounts of biofilm and produce amyloid fibrils. Expression of the 6 gene operon in E.coli strain BL21(DE3) induces flocculation and biofilm formation with copious extracellular fibrils. The polypeptide is Functional amyloid subunit FapC (Pseudomonas fluorescens).